The primary structure comprises 316 residues: Serpentine receptor class gamma-4 (316 aa).

7 helical membrane passes run 21–41 (FVYL…IWGT), 50–70 (SFFT…FLDV), 99–121 (IVYP…LSIN), 140–160 (MKKV…NVII), 188–208 (FQII…SITL), 229–249 (TAWI…FAFF), and 258–278 (IFYI…PIVM).

This sequence belongs to the nematode receptor-like protein srg family.

The protein resides in the membrane. In Caenorhabditis elegans, this protein is Serpentine receptor class gamma-4 (srg-4).